The primary structure comprises 144 residues: Large ribosomal subunit protein uL15 (144 aa).

A disordered region spans residues 1 to 60 (MRLNSLRPAAGSRPDANRVGRGAGTGNGKTAGRGHKGQHSRSGGFTKVGFEGGQMPLQRR). The segment covering 21 to 31 (RGAGTGNGKTA) has biased composition (gly residues).

Belongs to the universal ribosomal protein uL15 family. Part of the 50S ribosomal subunit.

Binds to the 23S rRNA. This chain is Large ribosomal subunit protein uL15, found in Alkalilimnicola ehrlichii (strain ATCC BAA-1101 / DSM 17681 / MLHE-1).